A 362-amino-acid polypeptide reads, in one-letter code: Protein Tob1 (362 aa).

The short motif at 22-39 (RRRVNIFGEELERLLKKK) is the Bipartite nuclear localization signal element. The important for nuclear localization stretch occupies residues 82–92 (VRGNLPQDLSV). A compositionally biased stretch (low complexity) spans 144–160 (DPASSVSSSPSPPFGHS). Positions 144 to 171 (DPASSVSSSPSPPFGHSAAVSPTFMPRS) are disordered. Residues 161 to 220 (AAVSPTFMPRSTQPLTFTTATFAATKFGSTKMKNSGRSSKVARTSPINLGLTVNVNDLLK) are required for interaction with CPEB3. Phosphothreonine is present on Thr-204. Residues 228–236 (VHSLYGLGL) carry the Nuclear export signal motif. The tract at residues 234–284 (LGLGSQQQPQPQPQQQQQQQPSSSQPPPPLPQQQQQQPQQQQQQQQQTSAL) is disordered. Composition is skewed to low complexity over residues 238 to 256 (SQQQ…QPSS) and 265 to 280 (QQQQ…QQQQ).

It belongs to the BTG family. Interacts with ERBB2. Interacts with CNOT7. Interacts with CPEB3 (via C-terminal RNA-binding region); recruits CNOT7 to CPEB3 to form a ternary complex required for mRNA deadenylation and decay. Interacts with CNOT8. Interacts with CPEB4. In terms of processing, phosphorylated on Ser and Thr residues. In terms of tissue distribution, ubiquitous.

The protein resides in the cytoplasm. It is found in the nucleus. In terms of biological role, anti-proliferative protein; the function is mediated by association with deadenylase subunits of the CCR4-NOT complex. Mediates CPEB3-accelerated mRNA deadenylation by binding to CPEB3 and recruiting CNOT7 which leads to target mRNA deadenylation and decay. The polypeptide is Protein Tob1 (Tob1) (Mus musculus (Mouse)).